We begin with the raw amino-acid sequence, 238 residues long: UDP-2,3-diacylglucosamine hydrolase (238 aa).

The Mn(2+) site is built by Asp-8, His-10, Asp-41, Asn-78, and His-113. 78–79 (NR) is a binding site for substrate. The substrate site is built by Asp-121, Ser-159, Asn-163, Lys-166, and His-194. Mn(2+)-binding residues include His-194 and His-196.

It belongs to the LpxH family. The cofactor is Mn(2+).

The protein resides in the cell inner membrane. The catalysed reaction is UDP-2-N,3-O-bis[(3R)-3-hydroxytetradecanoyl]-alpha-D-glucosamine + H2O = 2-N,3-O-bis[(3R)-3-hydroxytetradecanoyl]-alpha-D-glucosaminyl 1-phosphate + UMP + 2 H(+). Its pathway is glycolipid biosynthesis; lipid IV(A) biosynthesis; lipid IV(A) from (3R)-3-hydroxytetradecanoyl-[acyl-carrier-protein] and UDP-N-acetyl-alpha-D-glucosamine: step 4/6. In terms of biological role, hydrolyzes the pyrophosphate bond of UDP-2,3-diacylglucosamine to yield 2,3-diacylglucosamine 1-phosphate (lipid X) and UMP by catalyzing the attack of water at the alpha-P atom. Involved in the biosynthesis of lipid A, a phosphorylated glycolipid that anchors the lipopolysaccharide to the outer membrane of the cell. In Shewanella piezotolerans (strain WP3 / JCM 13877), this protein is UDP-2,3-diacylglucosamine hydrolase.